Reading from the N-terminus, the 109-residue chain is Fluoride-specific ion channel FluC 1 (109 aa).

4 helical membrane-spanning segments follow: residues 1–21 (MVIV…YFFS), 29–49 (LPLG…VFYN), 55–75 (EVYA…STLN), and 87–107 (VFYS…FLGI). Residues Gly-66 and Thr-69 each contribute to the Na(+) site.

Belongs to the fluoride channel Fluc/FEX (TC 1.A.43) family.

It is found in the cell membrane. It carries out the reaction fluoride(in) = fluoride(out). Na(+) is not transported, but it plays an essential structural role and its presence is essential for fluoride channel function. Functionally, fluoride-specific ion channel. Important for reducing fluoride concentration in the cell, thus reducing its toxicity. This Streptococcus pneumoniae (strain ATCC BAA-255 / R6) protein is Fluoride-specific ion channel FluC 1.